Here is a 264-residue protein sequence, read N- to C-terminus: Neurexophilin-2 (264 aa).

Positions 1–22 (MRLRPLPLVVVPGLLQLLFCDS) are cleaved as a signal peptide. The tract at residues 23-90 (EKVVHATEGL…WDWLANITEV (68 aa)) is II. Residues N86, N139, N149, and N155 are each glycosylated (N-linked (GlcNAc...) asparagine). Residues 91-169 (QEPLARTKRR…LVPPSKVVEF (79 aa)) form an III region. Residues 170–178 (EVSPQSTLE) form an IV (linker domain) region. Positions 179–264 (TKESKSFNCR…HSETPYLSSG (86 aa)) are v (Cys-rich).

Belongs to the neurexophilin family. In terms of processing, may be proteolytically processed at the boundary between the N-terminal non-conserved and the central conserved domain in neuron-like cells. Brain, only in a scattered subpopulation of neurons that probably represent inhibitory interneurons.

The protein resides in the secreted. Functionally, may be signaling molecules that resemble neuropeptides and that act by binding to alpha-neurexins and possibly other receptors. This Bos taurus (Bovine) protein is Neurexophilin-2 (NXPH2).